The chain runs to 135 residues: HTH-type transcriptional activator AarP (135 aa).

The HTH araC/xylS-type domain maps to 22 to 120 (SEILVWIEGN…GISPSLYRLS (99 aa)). 2 DNA-binding regions (H-T-H motif) span residues 39-60 (DDIA…RKIV) and 87-110 (VIDI…KAYL).

Functionally, transcriptional activator of 2'-N-acetyltransferase. The sequence is that of HTH-type transcriptional activator AarP (aarP) from Providencia stuartii.